The sequence spans 644 residues: MFQDNPLLAQLKQQLHSQTPRAEGVVKATEKGFGFLEVDAQKSYFIPPPQMKKVMHGDRIIAVIHSEKERESAEPEELVEPFLTRFVGKVQGKNDRLAIVPDHPLLKDAIPCRAARGLNHEFKEGDWAVAEMRRHPLKGDRSFYAELTQYITFGDDHFVPWWVTLARHNLEKEAPDGVATEMLDEGLVREDLTALDFVTIDSASTEDMDDALFAKALPDGKLQLIVAIADPTAWIAEGSKLDKAAKIRAFTNYLPGFNIPMLPRELSDDLCSLRANEVRPVLACRMTFSTDGTIEDNIEFFAATIESKAKLVYDQVSDWLENTGDWQPESEAIAEQVRLLAQICQRRGEWRHNHALVFKDRPDYRFILGEKGEVLDIVAEPRRIANRIVEEAMIAANICAARVLRDKLGFGIYNVHMGFDPANADALAALLKTHGLHVDAEEVLTLDGFCKLRRELDAQPTGFLDSRIRRFQSFAEISTEPGPHFGLGLEAYATWTSPIRKYGDMINHRLLKAVIKGETATRPQDEITVQMAERRRLNRMAERDVGDWLYARFLKDKAGTDTRFAAEIVDISRGGMRVRLVDNGAIAFIPAPFLHAVRDELVCSQENGTVQIKGETAYKVTDVIDVTIAEVRMETRSIIARPVA.

Residues 189–516 form the RNB domain; it reads REDLTALDFV…NHRLLKAVIK (328 aa). Residues 561 to 643 form the S1 motif domain; that stretch reads DTRFAAEIVD…ETRSIIARPV (83 aa).

It belongs to the RNR ribonuclease family. RNase II subfamily.

It is found in the cytoplasm. The catalysed reaction is Exonucleolytic cleavage in the 3'- to 5'-direction to yield nucleoside 5'-phosphates.. Involved in mRNA degradation. Hydrolyzes single-stranded polyribonucleotides processively in the 3' to 5' direction. This is Exoribonuclease 2 from Escherichia coli O45:K1 (strain S88 / ExPEC).